The following is a 556-amino-acid chain: Threonylcarbamoyladenosine tRNA methylthiotransferase (556 aa).

A disordered region spans residues 17 to 57 (SATDPKPHDRQSARKNIVPRARKRNKNNIQEEEPPADSTIP). The 109-residue stretch at 60-168 (QKIWIRTWGC…VVEVVEETIK (109 aa)) folds into the MTTase N-terminal domain. Residues Cys69, Cys105, Cys134, Cys210, Cys214, and Cys217 each contribute to the [4Fe-4S] cluster site. Residues 196–427 (RKNPLIEIIS…QLFHSYDPYD (232 aa)) enclose the Radical SAM core domain. The 63-residue stretch at 427 to 489 (DHKIGQKQQV…KHFMKGQPVQ (63 aa)) folds into the TRAM domain. The chain crosses the membrane as a helical span at residues 536–556 (VFLFLTALLAAVIAFVGTKLV).

The protein belongs to the methylthiotransferase family. CDKAL1 subfamily. [4Fe-4S] cluster is required as a cofactor.

The protein resides in the endoplasmic reticulum membrane. The catalysed reaction is N(6)-L-threonylcarbamoyladenosine(37) in tRNA + (sulfur carrier)-SH + AH2 + 2 S-adenosyl-L-methionine = 2-methylsulfanyl-N(6)-L-threonylcarbamoyladenosine(37) in tRNA + (sulfur carrier)-H + 5'-deoxyadenosine + L-methionine + A + S-adenosyl-L-homocysteine + 2 H(+). In terms of biological role, catalyzes the methylthiolation of N6-threonylcarbamoyladenosine (t(6)A), leading to the formation of 2-methylthio-N6-threonylcarbamoyladenosine (ms(2)t(6)A) at position 37 in tRNAs that read codons beginning with adenine. The protein is Threonylcarbamoyladenosine tRNA methylthiotransferase (cdkal1) of Xenopus laevis (African clawed frog).